A 108-amino-acid chain; its full sequence is Large ribosomal subunit protein uL24 (108 aa).

This sequence belongs to the universal ribosomal protein uL24 family. In terms of assembly, part of the 50S ribosomal subunit.

Its function is as follows. One of two assembly initiator proteins, it binds directly to the 5'-end of the 23S rRNA, where it nucleates assembly of the 50S subunit. In terms of biological role, one of the proteins that surrounds the polypeptide exit tunnel on the outside of the subunit. This is Large ribosomal subunit protein uL24 from Geotalea daltonii (strain DSM 22248 / JCM 15807 / FRC-32) (Geobacter daltonii).